Consider the following 564-residue polypeptide: Arginine--tRNA ligase (564 aa).

The 'HIGH' region motif lies at 136 to 146 (ANPTGPLHMGN).

It belongs to the class-I aminoacyl-tRNA synthetase family. In terms of assembly, monomer.

The protein localises to the cytoplasm. It carries out the reaction tRNA(Arg) + L-arginine + ATP = L-arginyl-tRNA(Arg) + AMP + diphosphate. This Ruminiclostridium cellulolyticum (strain ATCC 35319 / DSM 5812 / JCM 6584 / H10) (Clostridium cellulolyticum) protein is Arginine--tRNA ligase.